Consider the following 209-residue polypeptide: Large ribosomal subunit protein uL3 (209 aa).

Residues 122–152 (AIKRHGQSRGPMSHGSRYHRRPGSMGPVDPN) form a disordered region.

This sequence belongs to the universal ribosomal protein uL3 family. Part of the 50S ribosomal subunit. Forms a cluster with proteins L14 and L19. Interacts with RNA helicase CshA.

One of the primary rRNA binding proteins, it binds directly near the 3'-end of the 23S rRNA, where it nucleates assembly of the 50S subunit. Strongly stimulates 23S rRNA precursor processing by mini-ribonuclease 3 (MrnC); 20-30% DMSO can replace L3, suggesting the protein may alter rRNA conformation. This Bacillus subtilis (strain 168) protein is Large ribosomal subunit protein uL3.